Reading from the N-terminus, the 169-residue chain is MSYRKTVVSARRDQKKGRVGGLTEEQKQEIREAFDLFDTDGSGTIDAKELKVAMRALGFEPKKEEIKKMIADIDKAGSGTIDFEEFLQMMTSKMGERDSREEIIKAFKLFDDDNTGFITLKNLKRVAKELGENLTDEELQEMTDEADRNGDGQIDEDEFYRIMKKTSLF.

The tract at residues 1 to 24 is disordered; that stretch reads MSYRKTVVSARRDQKKGRVGGLTE. EF-hand domains lie at 25 to 60, 61 to 96, 98 to 133, and 134 to 169; these read EQKQEIREAFDLFDTDGSGTIDAKELKVAMRALGFE, PKKEEIKKMIADIDKAGSGTIDFEEFLQMMTSKMGE, DSREEIIKAFKLFDDDNTGFITLKNLKRVAKELGEN, and LTDEELQEMTDEADRNGDGQIDEDEFYRIMKKTSLF. Aspartate 38, aspartate 40, serine 42, threonine 44, and glutamate 49 together coordinate Ca(2+). Aspartate 147, asparagine 149, aspartate 151, glutamine 153, and glutamate 158 together coordinate Ca(2+).

Belongs to the centrin family.

In terms of biological role, this calcium-binding protein is found in the basal body complexes (the functional homolog of the centrosome in animal cell). In mitotic cells it is specifically associated with the poles of the mitotic spindles at the sites of the duplicated basal body complexes. The polypeptide is Caltractin (Dunaliella salina (Green alga)).